Consider the following 465-residue polypeptide: uncharacterized protein (465 aa).

Residues 1–15 (MEKNYIFENSIYKDE) are compositionally biased toward basic and acidic residues. 2 disordered regions span residues 1–31 (MEKN…NNSS) and 288–320 (QLEK…EQLP).

This is an uncharacterized protein from Dictyostelium discoideum (Social amoeba).